The chain runs to 281 residues: Urease accessory protein UreD 2 (281 aa).

It belongs to the UreD family. UreD, UreF and UreG form a complex that acts as a GTP-hydrolysis-dependent molecular chaperone, activating the urease apoprotein by helping to assemble the nickel containing metallocenter of UreC. The UreE protein probably delivers the nickel.

It is found in the cytoplasm. Its function is as follows. Required for maturation of urease via the functional incorporation of the urease nickel metallocenter. This is Urease accessory protein UreD 2 from Pseudomonas syringae pv. syringae (strain B728a).